The chain runs to 229 residues: Indole-3-glycerol phosphate synthase (229 aa).

It belongs to the TrpC family.

It carries out the reaction 1-(2-carboxyphenylamino)-1-deoxy-D-ribulose 5-phosphate + H(+) = (1S,2R)-1-C-(indol-3-yl)glycerol 3-phosphate + CO2 + H2O. The protein operates within amino-acid biosynthesis; L-tryptophan biosynthesis; L-tryptophan from chorismate: step 4/5. This Pyrococcus abyssi (strain GE5 / Orsay) protein is Indole-3-glycerol phosphate synthase.